The primary structure comprises 53 residues: UPF0391 membrane protein PC1_0455 (53 aa).

Transmembrane regions (helical) follow at residues 4–24 and 30–47; these read WGII…GGLA and AAKI…LSLF.

The protein belongs to the UPF0391 family.

The protein resides in the cell membrane. The chain is UPF0391 membrane protein PC1_0455 from Pectobacterium carotovorum subsp. carotovorum (strain PC1).